We begin with the raw amino-acid sequence, 400 residues long: MSNAIDELQAIIAELKSELEEQKTCTRNARERIERMSAEVVDSNPYSRLMALQRMNIVKDYERIRDKAVAIVGVGGVGSVTADMLTRCGIGKLILFDYDKVELANMNRLFFTPDQAGLSKVEAAARTLSFINPDVRIETHNYNITTVDNFDKFLSTISESGMQQGQPVDLVLSCVDNFEARMAINAACNENNLNWFESGVSENAVSGHIQFIRPGDTACFACAPPLVVAENIDERTLKREGVCAASLPTTMGITAGLLVQNALKYLLNFGEVSDYLGYNALNDFFPKMTLKPNTQCDDRHCLQRQKEFQERPKPVLQQVEEVSDEPLHASNDWGIELVADDAPVAEQAPKATDTANVASGLRLAYEAPEKEAVDQAGHAAAGDGMPETSLEDLMAQMKSM.

ATP is bound by residues Gly76, Asp97, Lys120, Asn143, and Asn177. Residues Cys219 and Cys222 each coordinate Zn(2+). The Glycyl thioester intermediate role is filled by Cys243. Zn(2+) contacts are provided by Cys296 and Cys301.

The protein belongs to the ubiquitin-activating E1 family. UBA5 subfamily.

Its function is as follows. E1-like enzyme which activates UFM1. In Drosophila virilis (Fruit fly), this protein is Ubiquitin-like modifier-activating enzyme 5.